A 133-amino-acid polypeptide reads, in one-letter code: Ribonuclease VapC10 (133 aa).

Residues I2–Q119 form the PINc domain. Residues D5 and D92 each coordinate Mg(2+).

This sequence belongs to the PINc/VapC protein family. The cofactor is Mg(2+).

In terms of biological role, toxic component of a type II toxin-antitoxin (TA) system. An RNase. The cognate antitoxin is VapB10. This is Ribonuclease VapC10 from Mycobacterium tuberculosis (strain CDC 1551 / Oshkosh).